Consider the following 649-residue polypeptide: Transmembrane and coiled-coil domains protein 1 (649 aa).

Methionine 1 carries the post-translational modification N-acetylmethionine. 4 disordered regions span residues 1 to 37 (MEPS…LSKM), 58 to 83 (HQRR…EVDL), 110 to 166 (RVPP…PTSS), and 197 to 222 (LAQT…GIPD). Topologically, residues 1–587 (MEPSGSEQLY…ARNLLGKLIN (587 aa)) are cytoplasmic. The segment covering 20–34 (QDAEARRQTESEQKL) has biased composition (basic and acidic residues). Residues 64–75 (SVSPHDVQQIQT) are compositionally biased toward polar residues. Residues 113-125 (PKMKRGTSLHSRR) show a composition bias toward basic residues. Low complexity predominate over residues 156-166 (SSSTTDAPTSS). The span at 197 to 214 (LAQTSSAVASSTDGSIHT) shows a compositional bias: polar residues. The stretch at 224-310 (QRTKAAIAHL…KLREVEQNGI (87 aa)) forms a coiled coil. Phosphoserine is present on residues serine 378 and serine 410. Residues 411–433 (PKYGSEEDCSSATSGSVGANSTT) form a disordered region. Residues 420–433 (SSATSGSVGANSTT) show a composition bias toward polar residues. The stretch at 457–566 (ALLHEVQEIR…KMELQQQQQQ (110 aa)) forms a coiled coil. 2 helical membrane-spanning segments follow: residues 588-608 (ILLA…NCVV) and 621-641 (LFLV…FSYV). Residues 642 to 649 (DRLFSPPR) are Cytoplasmic-facing.

Belongs to the TEX28 family. In terms of assembly, may form homodimers and heterodimers with TMCC2 or TMCC3 via the coiled-coil domains. Interacts with ribosomal proteins RPL4 and RPS6.

It localises to the endoplasmic reticulum membrane. Endoplasmic reticulum membrane protein that promotes endoplasmic reticulum-associated endosome fission. Localizes to contact sites between the endoplasmic reticulum and endosomes and acts by promoting recruitment of the endoplasmic reticulum to endosome tubules for fission. Endosome membrane fission of early and late endosomes is essential to separate regions destined for lysosomal degradation from carriers to be recycled to the plasma membrane. This chain is Transmembrane and coiled-coil domains protein 1 (Tmcc1), found in Mus musculus (Mouse).